The sequence spans 278 residues: HTH-type transcriptional activator RhaS (278 aa).

The 99-residue stretch at 174–272 (NLLLAWLEDH…NWSPRDIRQG (99 aa)) folds into the HTH araC/xylS-type domain. 2 DNA-binding regions (H-T-H motif) span residues 191-212 (DAVA…KQQT) and 239-262 (VTDI…RREF).

In terms of assembly, binds DNA as a dimer.

The protein resides in the cytoplasm. Activates expression of the rhaBAD and rhaT operons. This Escherichia coli O127:H6 (strain E2348/69 / EPEC) protein is HTH-type transcriptional activator RhaS.